The chain runs to 428 residues: Histidinol dehydrogenase (428 aa).

Tyrosine 126, glutamine 188, and asparagine 211 together coordinate NAD(+). Serine 234, glutamine 256, and histidine 259 together coordinate substrate. Zn(2+) contacts are provided by glutamine 256 and histidine 259. Catalysis depends on proton acceptor residues glutamate 324 and histidine 325. Residues histidine 325, aspartate 358, glutamate 412, and histidine 417 each contribute to the substrate site. Aspartate 358 serves as a coordination point for Zn(2+). Histidine 417 is a Zn(2+) binding site.

This sequence belongs to the histidinol dehydrogenase family. Zn(2+) is required as a cofactor.

It carries out the reaction L-histidinol + 2 NAD(+) + H2O = L-histidine + 2 NADH + 3 H(+). It functions in the pathway amino-acid biosynthesis; L-histidine biosynthesis; L-histidine from 5-phospho-alpha-D-ribose 1-diphosphate: step 9/9. In terms of biological role, catalyzes the sequential NAD-dependent oxidations of L-histidinol to L-histidinaldehyde and then to L-histidine. This Chlorobaculum tepidum (strain ATCC 49652 / DSM 12025 / NBRC 103806 / TLS) (Chlorobium tepidum) protein is Histidinol dehydrogenase.